Reading from the N-terminus, the 203-residue chain is Ribosomal RNA small subunit methyltransferase G (203 aa).

Residues Gly-73, Leu-78, 124-125 (VE), and Arg-139 contribute to the S-adenosyl-L-methionine site.

This sequence belongs to the methyltransferase superfamily. RNA methyltransferase RsmG family.

Its subcellular location is the cytoplasm. It catalyses the reaction guanosine(527) in 16S rRNA + S-adenosyl-L-methionine = N(7)-methylguanosine(527) in 16S rRNA + S-adenosyl-L-homocysteine. Functionally, specifically methylates the N7 position of guanine in position 527 of 16S rRNA. The sequence is that of Ribosomal RNA small subunit methyltransferase G from Haemophilus influenzae (strain 86-028NP).